The sequence spans 147 residues: MSDTIHVLNGPNLNLLGTREPGIYGAATLADVEALCRTTAAQHGLELVFRQSNHEGDLVDWIQAAAGSVGVVLNAGAYTHTSVALRDAIAGTGVPAVEVHLSNVFAREPFRHHSYLSPVVRGVICGFGPQSYVLGITALATTRPARP.

Tyrosine 24 (proton acceptor) is an active-site residue. Positions 74, 80, and 87 each coordinate substrate. Histidine 100 acts as the Proton donor in catalysis. Residues 101–102 and arginine 111 each bind substrate; that span reads LS.

This sequence belongs to the type-II 3-dehydroquinase family. As to quaternary structure, homododecamer.

It carries out the reaction 3-dehydroquinate = 3-dehydroshikimate + H2O. It participates in metabolic intermediate biosynthesis; chorismate biosynthesis; chorismate from D-erythrose 4-phosphate and phosphoenolpyruvate: step 3/7. Catalyzes a trans-dehydration via an enolate intermediate. This chain is 3-dehydroquinate dehydratase, found in Azorhizobium caulinodans (strain ATCC 43989 / DSM 5975 / JCM 20966 / LMG 6465 / NBRC 14845 / NCIMB 13405 / ORS 571).